We begin with the raw amino-acid sequence, 331 residues long: MAQASPPRPERVLGASSPEARPAQEALLLPTGVFQVAEKMEKRTCALCPKDVEYNVLYFAQSENIAAHENCLLYSSGLVECEDQDPLNPDRSFDVESVKKEIQRGRKLKCKFCHKRGATVGCDLKNCNKNYHFFCAKKDDAVPQSDGVRGIYKLLCQQHAQFPIIAQSAKFSGVKRKRGRKKPLSGNHVQPPETMKCNTFIRQVKEEHGRHTDATVKVPFLKKCKEAGLLNYLLEEILDKVHSIPEKLMDETTSESDYEEIGSALFDCRLFEDTFVNFQAAIEKKIHASQQRWQQLKEEIELLQDLKQTLCSFQENRDLMSSSTSISSLSY.

A C2HC pre-PHD-type zinc finger spans residues Lys-42 to Leu-78. A PHD-type zinc finger spans residues Leu-108 to Ala-160.

In terms of assembly, interacts with BRCA1 and RELA. Highly expressed in T and B-cells, as well as natural killer and mature dendritic cells. Expressed at higher levels in Th1 as compared to Th2 cells. Expressed at low levels in all normal tissues tested, including lung, testis, small intestine, breast, liver and placenta.

Its subcellular location is the nucleus. In terms of biological role, positive regulator of Th1-type cytokine gene expression. The polypeptide is PHD finger protein 11 (PHF11) (Homo sapiens (Human)).